Here is a 404-residue protein sequence, read N- to C-terminus: Protrudin (404 aa).

The disordered stretch occupies residues 1–25; it reads MQSSDRDLSGPEASPSVMPEVLSEC. The Cytoplasmic segment spans residues 1–63; it reads MQSSDRDLSG…LKDAGDGVRY (63 aa). Residues 1-92 form a sufficient for homooligomerization region; it reads MQSSDRDLSG…LFLTLNEGAW (92 aa). Residues 1-205 form a sufficient for localization to endoplasmic reticulum tubular network and for interactions with REEP1, REEP5, ATL1, ATL2, ATL3 and SPAST region; that stretch reads MQSSDRDLSG…LYLLPLCWVL (205 aa). A necessary for interaction with RAB11A and function in neurite outgrowth region spans residues 51 to 64; that stretch reads LEPLKDAGDGVRYL. A helical membrane pass occupies residues 64–85; it reads LLRWQMPLCSLLTCLGLNILFL. The Lumenal segment spans residues 86-90; the sequence is TLNEG. The chain crosses the membrane as a helical span at residues 91–109; the sequence is AWYSVGALIISVPALLGYL. Residues 110–187 lie on the Cytoplasmic side of the membrane; it reads QEVCRAQLPE…NPVVSSQFYG (78 aa). The segment at residues 188–208 is an intramembrane region (helical); the sequence is ALLGMVCMLYLLPLCWVLALL. Residues 209–404 are Cytoplasmic-facing; the sequence is NSTLFLGNGE…CASCNQTLSK (196 aa). Residues 259–299 form a disordered region; the sequence is DSTPAPTPTEDLTPGSVEEAEEAEPDEEFKDAIEEDDEGTP. Residues 271-354 form a necessary for interaction with KIF5A region; that stretch reads TPGSVEEAEE…GCAATFSVLK (84 aa). The segment covering 276–299 has biased composition (acidic residues); the sequence is EEAEEAEPDEEFKDAIEEDDEGTP. The interval 286 to 292 is necessary for interaction with VAPA; it reads EFKDAIE. An FYVE-type zinc finger spans residues 337 to 403; sequence TNNFGNCAGC…VCASCNQTLS (67 aa). Residues Cys-343, Cys-346, Cys-359, Cys-362, Cys-367, Cys-370, Cys-395, and Cys-398 each contribute to the Zn(2+) site.

In terms of assembly, can form homooligomers (monomers, dimers and tetramers). Interacts with FKBP8; may negatively regulate ZFYVE27 phosphorylation. Interacts with VAPA (via MSP domain); may regulate ZFYVE27 retention in the endoplasmic reticulum and its function in cell projections formation. Interacts with VAPB (via MSP domain). Interacts with RAB11A (GDP-bound form); regulates RAB11A. Interacts with RAB11B (GDP-bound form), REEP1, REEP5, ATL1, ATL2, ATL3, SPAST, SURF4, KIF5A, KIF5B, KIF5C and RTN3. In terms of processing, phosphorylated. Phosphorylation is induced by NGF through the MAPK/ERK pathway and modulates interaction with RAB11A.

The protein localises to the recycling endosome membrane. The protein resides in the endoplasmic reticulum membrane. It is found in the cell projection. Its subcellular location is the growth cone membrane. In terms of biological role, key regulator of RAB11-dependent vesicular trafficking during neurite extension through polarized membrane transport. Promotes axonal elongation and contributes to the establishment of neuronal cell polarity. Involved in nerve growth factor-induced neurite formation in VAPA-dependent manner. Contributes to both the formation and stabilization of the tubular ER network. Involved in ER morphogenesis by regulating the sheet-to-tubule balance and possibly the density of tubule interconnections. Acts as an adapter protein that facilitates the interaction of KIF5A with VAPA, VAPB, SURF4, RAB11A, RAB11B and RTN3 and the ZFYVE27-KIF5A complex contributes to the transport of these proteins in neurons. Can induce formation of neurite-like membrane protrusions in non-neuronal cells in a KIF5A/B-dependent manner. This is Protrudin (Zfyve27) from Rattus norvegicus (Rat).